Consider the following 148-residue polypeptide: Nucleoside diphosphate kinase (148 aa).

K10, F58, R86, T92, R103, and N113 together coordinate ATP. Catalysis depends on H116, which acts as the Pros-phosphohistidine intermediate.

It belongs to the NDK family. Requires Mg(2+) as cofactor.

The protein localises to the cytoplasm. It carries out the reaction a 2'-deoxyribonucleoside 5'-diphosphate + ATP = a 2'-deoxyribonucleoside 5'-triphosphate + ADP. The catalysed reaction is a ribonucleoside 5'-diphosphate + ATP = a ribonucleoside 5'-triphosphate + ADP. In terms of biological role, major role in the synthesis of nucleoside triphosphates other than ATP. The ATP gamma phosphate is transferred to the NDP beta phosphate via a ping-pong mechanism, using a phosphorylated active-site intermediate. This is Nucleoside diphosphate kinase from Thermoplasma acidophilum (strain ATCC 25905 / DSM 1728 / JCM 9062 / NBRC 15155 / AMRC-C165).